The sequence spans 270 residues: UPF0162 protein VC_2176 (270 aa).

This sequence belongs to the UPF0162 family.

The chain is UPF0162 protein VC_2176 from Vibrio cholerae serotype O1 (strain ATCC 39315 / El Tor Inaba N16961).